The chain runs to 165 residues: Peptide methionine sulfoxide reductase MsrA (165 aa).

C10 is a catalytic residue.

Belongs to the MsrA Met sulfoxide reductase family.

The catalysed reaction is L-methionyl-[protein] + [thioredoxin]-disulfide + H2O = L-methionyl-(S)-S-oxide-[protein] + [thioredoxin]-dithiol. It catalyses the reaction [thioredoxin]-disulfide + L-methionine + H2O = L-methionine (S)-S-oxide + [thioredoxin]-dithiol. Has an important function as a repair enzyme for proteins that have been inactivated by oxidation. Catalyzes the reversible oxidation-reduction of methionine sulfoxide in proteins to methionine. The polypeptide is Peptide methionine sulfoxide reductase MsrA (Campylobacter jejuni subsp. jejuni serotype O:23/36 (strain 81-176)).